Reading from the N-terminus, the 1167-residue chain is Tight junction protein 2 (1167 aa).

In terms of domain architecture, PDZ 1 spans 10–97 (TVTLQKDSKR…IAAIVVKRPR (88 aa)). Phosphoserine is present on residues Ser-107, Ser-127, Ser-130, Ser-140, Ser-145, Ser-147, Ser-173, Ser-194, Ser-205, and Ser-239. A disordered region spans residues 129 to 195 (RSGYSERSRH…SRERSRGRSL (67 aa)). A disordered region spans residues 225 to 286 (SYHEAYEPDY…KGQHDPDRPI (62 aa)). Basic and acidic residues predominate over residues 242–262 (YDRRAHPETRYERSRSREHLR). One can recognise a PDZ 2 domain in the interval 287 to 365 (GVLLTKSKAN…KLQLVVLRDS (79 aa)). Phosphoserine occurs at positions 305, 378, 380, 386, 395, 404, 410, and 411. The segment at 381-485 (EVEDISEIES…LRPSPEDEAI (105 aa)) is disordered. The segment covering 395-426 (SPEERRQQYSDQDYHSSTEKLKERPSSREETS) has biased composition (basic and acidic residues). At Thr-435 the chain carries Phosphothreonine. Phosphoserine is present on Ser-479. Residues 489–570 (NTKMVRFKKG…GETVTILAQS (82 aa)) form the PDZ 3 domain. Position 554 is a phosphotyrosine (Tyr-554). Residues 584-649 (GDSFFIRSHF…PNKSRAEQMA (66 aa)) enclose the SH3 domain. The Guanylate kinase-like domain maps to 660-858 (GDRADFWRMR…WFGSLKDSIQ (199 aa)). Ser-684 and Ser-884 each carry phosphoserine. Thr-887 is modified (phosphothreonine). A phosphoserine mark is found at Ser-895 and Ser-902. Disordered stretches follow at residues 904–1055 (FEDT…PRSV) and 1095–1167 (YAVP…DTEL). Phosphothreonine occurs at positions 907 and 915. A compositionally biased stretch (basic and acidic residues) spans 938–949 (VQHEENIRKSSP). Phosphoserine is present on residues Ser-948, Ser-960, Ser-968, Ser-988, and Ser-1044. Residues 976 to 990 (EPPKARSQNREDSFD) are compositionally biased toward basic and acidic residues. Residues 1037-1049 (ESEEVGESTEEQE) show a composition bias toward acidic residues. Tyr-1095 bears the Phosphotyrosine mark. Ser-1124 and Ser-1136 each carry phosphoserine. Residues 1165 to 1167 (TEL) are interaction with SCRIB.

Belongs to the MAGUK family. In terms of assembly, homodimer. Interacts (via PDZ2 domain) with TJP1/ZO1 (via PDZ2 domain). Interacts with UBN1. Interacts with SCRIB. Interacts with OCLN. Interacts with SAFB in the nucleus. Interacts with USP53 (via the C-terminal region). Interacts with claudins, including CLDN1, CLDN2, CLDN3, CLDN5 and CLDN7. Interacts with CLDN18. Interacts (via N-terminus) with CTNNA1.

The protein resides in the cell junction. The protein localises to the adherens junction. It localises to the cell membrane. Its subcellular location is the nucleus. It is found in the tight junction. Plays a role in tight junctions and adherens junctions. Acts as a positive regulator of RANKL-induced osteoclast differentiation, potentially via mediating downstream transcriptional activity. The chain is Tight junction protein 2 from Mus musculus (Mouse).